Here is a 219-residue protein sequence, read N- to C-terminus: Lipid transferase CIDEB (219 aa).

Residues 33-110 (PRQRPFRVCD…VLELGQSWSP (78 aa)) enclose the CIDE-N domain.

The protein belongs to the CIDE family. As to quaternary structure, interacts with DFFA. Interacts with DFFB; inhibited by DFFB. Interacts with APOB. Interacts with PREB/SEC12; facilitating loading of SCAP-SREBP into COPII vesicles.

It localises to the lipid droplet. Its subcellular location is the endoplasmic reticulum membrane. The protein resides in the golgi apparatus. The protein localises to the cytoplasmic vesicle. It is found in the COPI-coated vesicle. Its function is as follows. Lipid transferase specifically expressed in hepatocytes, which promotes unilocular lipid droplet formation by mediating lipid droplet fusion. Lipid droplet fusion promotes their enlargement, restricting lipolysis and favoring lipid storage. Localizes on the lipid droplet surface, at focal contact sites between lipid droplets, and mediates atypical lipid droplet fusion by promoting directional net neutral lipid transfer from the smaller to larger lipid droplets. The transfer direction may be driven by the internal pressure difference between the contacting lipid droplet pair. Promotes lipid exchange and lipid droplet fusion in both small and large lipid droplet-containing hepatocytes. In addition to its role in lipid droplet fusion, also involved in cytoplasmic vesicle biogenesis and transport. Required for very-low-density lipoprotein (VLDL) lipidation and maturation. Probably involved in the biogenesis of VLDL transport vesicles by forming a COPII vesicle coat and facilitating the formation of endoplasmic reticulum-derived large vesicles. Also involved in sterol-regulated export of the SCAP-SREBP complex, composed of SCAP, SREBF1/SREBP1 and SREBF2/SREBP2, by promoting loading of SCAP-SREBP into COPII vesicles. May also activate apoptosis. In Bos taurus (Bovine), this protein is Lipid transferase CIDEB (CIDEB).